The primary structure comprises 470 residues: Argininosuccinate lyase (470 aa).

This sequence belongs to the lyase 1 family. Argininosuccinate lyase subfamily.

The protein localises to the cytoplasm. The catalysed reaction is 2-(N(omega)-L-arginino)succinate = fumarate + L-arginine. The protein operates within amino-acid biosynthesis; L-arginine biosynthesis; L-arginine from L-ornithine and carbamoyl phosphate: step 3/3. In Prochlorococcus marinus (strain MIT 9303), this protein is Argininosuccinate lyase.